A 425-amino-acid chain; its full sequence is Tumor necrosis factor receptor superfamily member 16 (425 aa).

A signal peptide spans M1 to A29. The Extracellular segment spans residues K30 to I253. TNFR-Cys repeat units lie at residues T32–C65, P67–C108, R109–C147, and E149–C189. Cystine bridges form between C33/C44, C45/C58, C48/C65, C68/C84, C87/C100, C90/C108, C110/C123, C126/C139, C129/C147, C150/C165, C168/C181, and C171/C189. N-linked (GlcNAc...) asparagine glycans are attached at residues N61 and N71. A disordered region spans residues P193–V225. Positions S206–E215 are enriched in polar residues. A helical membrane pass occupies residues P254 to K274. The Cytoplasmic segment spans residues R275–V425. Polar residues-rich tracts occupy residues N282–N292 and S306–G327. Positions N282–G332 are disordered. S312 carries the post-translational modification Phosphoserine. The interval G327–L342 is mediates interaction with KIDINS220. The 66-residue stretch at G354 to S419 folds into the Death domain.

Homodimer; disulfide-linked. Heterodimer with SORCS2. The extracellular domains of the heterodimer bind NGF. The cytoplasmic region of the heterodimer binds TRIO. NGF binding mediates dissociation of TRIO from the receptor complex. Interacts with RTN4R. Interacts with TRAF2, TRAF4 and TRAF6. Interacts with PTPN13 and RANBP9. Interacts through TRAF6 with SQSTM1 which bridges NGFR to NTRK1. Interacts with BEX1. Interacts with BEX3. Interacts with KIDINS220 and NTRK1. Can form a ternary complex with NTRK1 and KIDINS220 and this complex is affected by the expression levels of KIDINS220. An increase in KIDINS220 expression leads to a decreased association of NGFR and NTRK1. Interacts (via death domain) with RAB31. Interacts with NTRK2; may regulate the ligand specificity of the NTRK2 receptor. Interacts with LINGO1. Interacts with NRADD. Interacts with MAGED1; the interaction antagonizes the association NGFR:NTRK1. Interacts (via death domain) with ARHGDIA and RIPK2. Interacts with BFAR. In terms of processing, subject to intramembrane proteolytic cleavage by the gamma-secretase complex, giving rise to an intracellular fragment that is rapidly degraded via the proteasome. Post-translationally, N- and O-glycosylated. Phosphorylated on serine residues.

The protein localises to the cell membrane. It localises to the cytoplasm. It is found in the perikaryon. Its subcellular location is the cell projection. The protein resides in the growth cone. The protein localises to the dendritic spine. Its function is as follows. Low affinity receptor which can bind to NGF, BDNF, NTF3, and NTF4. Forms a heterodimeric receptor with SORCS2 that binds the precursor forms of NGF, BDNF and NTF3 with high affinity, and has much lower affinity for mature NGF and BDNF. In response to proNGF binding, the heterodimeric receptor with SORCS2 activates a signaling cascade that leads to decreased Rac activity, reorganization of the actin cytoskeleton and neuronal growth cone collapse. Plays an important role in differentiation and survival of specific neuronal populations during development. Can mediate cell survival as well as cell death of neural cells. Plays a role in the inactivation of RHOA. Plays a role in the regulation of the translocation of GLUT4 to the cell surface in adipocytes and skeletal muscle cells in response to insulin, probably by regulating RAB31 activity, and thereby contributes to the regulation of insulin-dependent glucose uptake. Necessary for the circadian oscillation of the clock genes BMAL1, PER1, PER2 and NR1D1 in the suprachiasmatic nucleus (SCN) of the brain and in liver and of the genes involved in glucose and lipid metabolism in the liver. The sequence is that of Tumor necrosis factor receptor superfamily member 16 (Ngfr) from Rattus norvegicus (Rat).